The chain runs to 266 residues: Glutamate racemase 1 (266 aa).

Residues 11-12 (DS) and 43-44 (YG) contribute to the substrate site. Catalysis depends on Cys-74, which acts as the Proton donor/acceptor. 75-76 (NT) contacts substrate. Residue Cys-182 is the Proton donor/acceptor of the active site. 183 to 184 (TH) lines the substrate pocket.

This sequence belongs to the aspartate/glutamate racemases family.

The enzyme catalyses L-glutamate = D-glutamate. Its pathway is cell wall biogenesis; peptidoglycan biosynthesis. In terms of biological role, provides the (R)-glutamate required for cell wall biosynthesis. This is Glutamate racemase 1 from Caldanaerobacter subterraneus subsp. tengcongensis (strain DSM 15242 / JCM 11007 / NBRC 100824 / MB4) (Thermoanaerobacter tengcongensis).